Here is a 60-residue protein sequence, read N- to C-terminus: Large ribosomal subunit protein bL32 (60 aa).

This sequence belongs to the bacterial ribosomal protein bL32 family.

The polypeptide is Large ribosomal subunit protein bL32 (Synechococcus sp. (strain JA-3-3Ab) (Cyanobacteria bacterium Yellowstone A-Prime)).